Reading from the N-terminus, the 120-residue chain is Ribonuclease P protein component (120 aa).

Belongs to the RnpA family. Consists of a catalytic RNA component (M1 or rnpB) and a protein subunit.

It catalyses the reaction Endonucleolytic cleavage of RNA, removing 5'-extranucleotides from tRNA precursor.. In terms of biological role, RNaseP catalyzes the removal of the 5'-leader sequence from pre-tRNA to produce the mature 5'-terminus. It can also cleave other RNA substrates such as 4.5S RNA. The protein component plays an auxiliary but essential role in vivo by binding to the 5'-leader sequence and broadening the substrate specificity of the ribozyme. This is Ribonuclease P protein component from Chlamydia trachomatis serovar L2 (strain ATCC VR-902B / DSM 19102 / 434/Bu).